The primary structure comprises 407 residues: Probable endo-beta-1,4-glucanase celB (407 aa).

An N-terminal signal peptide occupies residues 1 to 18 (MAQTLAAASLVLVPLVTA). A glycan (N-linked (GlcNAc...) asparagine) is linked at asparagine 136. Catalysis depends on glutamate 216, which acts as the Nucleophile. Catalysis depends on glutamate 221, which acts as the Proton donor.

This sequence belongs to the glycosyl hydrolase 7 (cellulase C) family.

The protein localises to the secreted. The catalysed reaction is Endohydrolysis of (1-&gt;4)-beta-D-glucosidic linkages in cellulose, lichenin and cereal beta-D-glucans.. Has endoglucanase activity on substrates containing beta-1,4 glycosidic bonds, like in carboxymethylcellulose (CMC), hydroxyethylcellulose (HEC) and beta-glucan. Involved in the degradation of complex natural cellulosic substrates. This chain is Probable endo-beta-1,4-glucanase celB (celB), found in Aspergillus fumigatus (strain ATCC MYA-4609 / CBS 101355 / FGSC A1100 / Af293) (Neosartorya fumigata).